The sequence spans 287 residues: Undecaprenyl-diphosphatase (287 aa).

A run of 7 helical transmembrane segments spans residues 6–26 (LYLI…FIPV), 45–65 (SGKV…MWIF), 85–105 (AFTR…AIFI), 111–131 (VFYH…IMLW), 204–224 (ATEF…TYDL), 238–258 (AIAV…RAVL), and 265–285 (TYRG…AWLM).

The protein belongs to the UppP family.

Its subcellular location is the cell inner membrane. It catalyses the reaction di-trans,octa-cis-undecaprenyl diphosphate + H2O = di-trans,octa-cis-undecaprenyl phosphate + phosphate + H(+). In terms of biological role, catalyzes the dephosphorylation of undecaprenyl diphosphate (UPP). Confers resistance to bacitracin. The protein is Undecaprenyl-diphosphatase of Bordetella petrii (strain ATCC BAA-461 / DSM 12804 / CCUG 43448).